We begin with the raw amino-acid sequence, 660 residues long: Protein FAM161A (660 aa).

Coiled-coil stretches lie at residues 93 to 120 (EEYF…YQDK) and 296 to 320 (YHDL…ALLA). The tract at residues 341–525 (QLRDFLKYKK…PTVSSRGREQ (185 aa)) is required for interaction with CFAP418. Glycyl lysine isopeptide (Lys-Gly) (interchain with G-Cter in SUMO2) cross-links involve residues Lys-468 and Lys-484. A coiled-coil region spans residues 522–552 (GREQAVRKSEKERMREYQRELEEREEKLKKR). Positions 605–660 (KSVTEDKESFNEEEKIEERENGEENYFIDTNSQDSYKEKDEANEESEEEKSVEESH) are disordered. The span at 606 to 623 (SVTEDKESFNEEEKIEER) shows a compositional bias: basic and acidic residues. Residues 645–660 (EANEESEEEKSVEESH) show a composition bias toward acidic residues.

It belongs to the FAM161 family. In terms of assembly, interacts (via central region) with CFAP418 (via N-terminus); the interaction is direct. Interacts (via C-terminus) with microtubules. Interacts with LCA5. Interacts with CEP290. Interacts with SDCCAG8. Interacts with FAM161B. Interacts with POC1B. Interacts with CEP78. Forms a microtubule-associated complex with POC5, CETN2 and POC1B. Interacts with CCDC15. Isoform 1 and isoform 3 are widely expressed with highest levels in retina and testis, with isoform 1 being the most abundant in all tissues tested.

Its subcellular location is the cytoplasm. It localises to the cytoskeleton. It is found in the cilium basal body. The protein localises to the cell projection. The protein resides in the cilium. Its subcellular location is the microtubule organizing center. It localises to the centrosome. It is found in the centriole. Involved in ciliogenesis. This Homo sapiens (Human) protein is Protein FAM161A (FAM161A).